A 375-amino-acid polypeptide reads, in one-letter code: Alcohol dehydrogenase 1 (375 aa).

At serine 2 the chain carries N-acetylserine. Zn(2+)-binding residues include cysteine 47, histidine 68, cysteine 98, cysteine 101, cysteine 104, cysteine 112, and cysteine 175. NAD(+) is bound by residues tryptophan 200–glycine 205, aspartate 224, and lysine 229. Position 234 is an N6-succinyllysine (lysine 234). Valine 293 to valine 295 contributes to the NAD(+) binding site. Lysine 340 is subject to N6-succinyllysine. Arginine 370 lines the NAD(+) pocket.

Belongs to the zinc-containing alcohol dehydrogenase family. Class-I subfamily. Homodimer. Zn(2+) is required as a cofactor.

It localises to the cytoplasm. The enzyme catalyses a primary alcohol + NAD(+) = an aldehyde + NADH + H(+). It catalyses the reaction a secondary alcohol + NAD(+) = a ketone + NADH + H(+). The chain is Alcohol dehydrogenase 1 (ADH1) from Geomys attwateri (Attwater's pocket gopher).